The following is a 178-amino-acid chain: MDSQGPIILEKSIKIEEVIKIANTSIIDIVTKTVTPEIKAPYELVDVEYDKMGSDYILSILVDKEDGITVEDTSDLTNIISPLLDTIDPDPFPNQYMLEVSSPGLERPLKTADSLKAAVGSYINVSLYQAIDKVKVFQGDLLAFDGETLTIDYLDKTRHKIVNIPYQAVAKVRMAVKL.

Belongs to the RimP family.

It localises to the cytoplasm. In terms of biological role, required for maturation of 30S ribosomal subunits. This chain is Ribosome maturation factor RimP, found in Streptococcus pyogenes serotype M3 (strain ATCC BAA-595 / MGAS315).